The primary structure comprises 357 residues: Isopenicillin-N N-acyltransferase (357 aa).

Asp-121 and Arg-310 together coordinate 6-aminopenicillanate.

Belongs to the peptidase C45 family. As to quaternary structure, the active form of the enzyme results from processing of the 40-kDa monomeric precursor to a heterodimer containing subunits of 11 and 29 kDa. In terms of processing, the pre-AAT protein is synthesized as 40 kDa precursor which is then self-processed into an 11 kDa (protein A) and a 29 kDa (protein B). The B protein carries AAT activity.

It is found in the peroxisome matrix. It carries out the reaction isopenicillin N + phenylacetyl-CoA + H2O = penicillin G + L-2-aminoadipate + CoA + H(+). The protein operates within antibiotic biosynthesis; penicillin G biosynthesis; penicillin G from L-alpha-aminoadipate and L-cysteine and L-valine: step 3/3. Isopenicillin-N N-acyltransferase; part of the gene cluster that mediates the biosynthesis of penicillin, the world's most important antibiotic. AatA catalyzes the exchange of the alpha-aminoadipyl side chain of isopenicillin N for phenylacetic acid to yield penicillin. This step occurs in the peroxisomal matrix and the penM and paaT transporters are involved in the isopenicillin N and phenylacetic acid import into the peroxisome, respectively. The penicillin biosynthesis occurs via 3 enzymatic steps, the first corresponding to the production of the tripeptide N-[(5S)-5-amino-5-carboxypentanoyl]-L-cysteinyl-D-valine (LLD-ACV or ACV) by the NRPS acvA. The tripeptide ACV is then cyclized to isopenicillin N (IPN) by the isopenicillin N synthase ipnA that forms the beta-lactam nucleus. Finally, the alpha-aminoadipyl side chain is exchanged for phenylacetic acid by the isopenicillin N acyltransferase aatA to yield penicillin in the peroxisomal matrix. The chain is Isopenicillin-N N-acyltransferase from Penicillium chrysogenum (Penicillium notatum).